The sequence spans 254 residues: Alcohol dehydrogenase 2 (254 aa).

An NAD(+)-binding site is contributed by 10-33 (FVAGLGGIGFDTSREIVKSGPKNL). Ser-138 contacts substrate. Catalysis depends on Tyr-151, which acts as the Proton acceptor.

The protein belongs to the short-chain dehydrogenases/reductases (SDR) family. In terms of assembly, homodimer.

It catalyses the reaction a primary alcohol + NAD(+) = an aldehyde + NADH + H(+). The catalysed reaction is a secondary alcohol + NAD(+) = a ketone + NADH + H(+). The protein is Alcohol dehydrogenase 2 (Adh2) of Drosophila mulleri (Fruit fly).